We begin with the raw amino-acid sequence, 391 residues long: PPE family protein PPE18 (391 aa).

Belongs to the mycobacterial PPE family. In terms of assembly, interacts with human TLR2.

It localises to the secreted. The protein localises to the cell wall. The protein resides in the cell surface. In terms of biological role, could be a crucial virulence factor for intracellular survival of M.tuberculosis. Favors development of Th2-type response, and down-regulates the pro-inflammatory and Th1-type response. Specifically interacts with the human Toll-like receptor 2 (TLR2), leading to an early and sustained activation of p38 MAPK, which induces IL-10 production and activates Th2-type immune response. Also inhibits pro-inflammatory cytokines IL-12p40 and TNF-alpha production. Acts by up-regulating the expression as well as tyrosine phosphorylation of suppressor of cytokine signaling 3 (SOCS-3), leading to the inhibition of phosphorylation of I-kappa-B-alpha, thereby preventing nuclear translocation of the NF-kappa-B/REL subunits and expression of NF-kappa-B regulated genes like IL-12 and TNF-alpha. Induction of SOCS-3 probably depends on the activation of p38 MAPK. The chain is PPE family protein PPE18 from Mycobacterium tuberculosis (strain ATCC 25618 / H37Rv).